The chain runs to 189 residues: Probable transcriptional regulator Rv1176c (189 aa).

The protein belongs to the PadR family. As to quaternary structure, homodimer.

Its subcellular location is the cytoplasm. Functionally, probable transcriptional regulator that may help mitigate the effect of oxidative stress and help mycobacteria survive inside macrophages. Binds to its own promoter region. The polypeptide is Probable transcriptional regulator Rv1176c (Mycobacterium tuberculosis (strain ATCC 25618 / H37Rv)).